A 416-amino-acid chain; its full sequence is Photosystem II stability/assembly factor HCF136, chloroplastic (416 aa).

Residues 1 to 36 (MATTASLHLHLHLLLSSSRRRCRLLVPRAHTDSIST) constitute a chloroplast transit peptide. Residues 37–67 (GRRRFIADTATASAAAAVGPLVLPRTPLARA) constitute a thylakoid transit peptide.

Belongs to the Ycf48 family.

The protein resides in the plastid. It localises to the chloroplast thylakoid lumen. Functionally, essential for photosystem II (PSII) biogenesis; required for assembly of an early intermediate in PSII assembly that includes D2 (psbD) and cytochrome b559. This is Photosystem II stability/assembly factor HCF136, chloroplastic (HCF136) from Oryza sativa subsp. japonica (Rice).